The chain runs to 364 residues: Dihydroorotate dehydrogenase (quinone) (364 aa).

FMN contacts are provided by residues Ala61 to Lys65 and Thr85. Lys65 lines the substrate pocket. Asn110–Phe114 is a substrate binding site. FMN-binding residues include Asn139 and Asn170. Asn170 contacts substrate. Ser173 (nucleophile) is an active-site residue. Asn175 is a binding site for substrate. The FMN site is built by Lys214 and Ala242. Residue Asn243–Thr244 participates in substrate binding. FMN-binding positions include Gly266, Gly295, and Tyr316–Ser317.

The protein belongs to the dihydroorotate dehydrogenase family. Type 2 subfamily. As to quaternary structure, monomer. It depends on FMN as a cofactor.

The protein resides in the cell membrane. The enzyme catalyses (S)-dihydroorotate + a quinone = orotate + a quinol. It participates in pyrimidine metabolism; UMP biosynthesis via de novo pathway; orotate from (S)-dihydroorotate (quinone route): step 1/1. Functionally, catalyzes the conversion of dihydroorotate to orotate with quinone as electron acceptor. The sequence is that of Dihydroorotate dehydrogenase (quinone) from Rhodopseudomonas palustris (strain BisB5).